The chain runs to 432 residues: uncharacterized protein (432 aa).

The segment covering 1 to 14 has biased composition (polar residues); it reads MSDTTDVPENQKSP. The segment at 1–42 is disordered; the sequence is MSDTTDVPENQKSPKPSGKADKRKIEEKPENSSLKRKKFEDP. The segment covering 18–30 has biased composition (basic and acidic residues); it reads GKADKRKIEEKPE. In terms of domain architecture, S4 RNA-binding spans 85–148; it reads RKMVEVFSGE…HEHPIRDLPI (64 aa). The active site involves Asp199.

This sequence belongs to the pseudouridine synthase RluA family.

This is an uncharacterized protein from Caenorhabditis elegans.